The primary structure comprises 312 residues: Homoserine O-acetyltransferase (312 aa).

Residue C142 is the Acyl-thioester intermediate of the active site. The substrate site is built by K163 and S192. H235 acts as the Proton acceptor in catalysis. The active site involves E237. R249 is a binding site for substrate.

The protein belongs to the MetA family.

Its subcellular location is the cytoplasm. It catalyses the reaction L-homoserine + acetyl-CoA = O-acetyl-L-homoserine + CoA. It participates in amino-acid biosynthesis; L-methionine biosynthesis via de novo pathway; O-acetyl-L-homoserine from L-homoserine: step 1/1. In terms of biological role, transfers an acetyl group from acetyl-CoA to L-homoserine, forming acetyl-L-homoserine. The polypeptide is Homoserine O-acetyltransferase (Chelativorans sp. (strain BNC1)).